A 576-amino-acid polypeptide reads, in one-letter code: MKTKYSYYNNQLTLIHQGKIVFLKGFIFRKRNLGKTLFFDLRDVSGIVQLLVKENNPQYDKIALIKLETVVQIKGQVIERINKNPDLPTGDIEILVSHIEILSEAQTLPLNVFQSQESLEETRLKYRYLDLRNPEVKHFLIQRHHITQSIRQTLLKNDFLELETPILSKSTPEGARDYLVPSRIYPGNFYALPQSPQLFKQLYMIAGFERYFQVARCFRDEDLRSDRQPEFSQIDIETSFLNQDEIMSLTEEIIVDLFANIWKKPLLQPFLRLTYQQAFELYGSDKPDLRNPLKITDFTTFFDTNTYSQNIFAGKIKGFKVSKTAFLTRRKLDEYQLFFSKHFNLKLFSFVKKNDKIIGGISQFIQDDSFLKNEEICFVVSGKKDIIHKALGIFRTKLALDLSLVDTTQEALLWIVDFPLFETIQEDLSPPNRLYSLHHPFTAPRDATILKSNPQKALANAYDLVWNGYEVGGGSLRINNHQTQELIFSLLGFLQEEVQNRFGFLIEALKYGTPPHGGIALGLDRLVMLFTKTNNIKDVIAFPKTQSAKDLMLEAPSAVNQEQLNTLKLQLKCNFN.

Glu173 serves as a coordination point for L-aspartate. Residues 197–200 are aspartate; that stretch reads QLFK. Arg219 provides a ligand contact to L-aspartate. Residues 219–221 and Gln228 each bind ATP; that span reads RDE. His438 is a binding site for L-aspartate. Glu470 provides a ligand contact to ATP. Arg477 contacts L-aspartate. Position 522–525 (522–525) interacts with ATP; it reads GLDR.

Belongs to the class-II aminoacyl-tRNA synthetase family. Type 1 subfamily. In terms of assembly, homodimer.

The protein resides in the cytoplasm. The catalysed reaction is tRNA(Asp) + L-aspartate + ATP = L-aspartyl-tRNA(Asp) + AMP + diphosphate. In terms of biological role, catalyzes the attachment of L-aspartate to tRNA(Asp) in a two-step reaction: L-aspartate is first activated by ATP to form Asp-AMP and then transferred to the acceptor end of tRNA(Asp). This is Aspartate--tRNA ligase from Aster yellows witches'-broom phytoplasma (strain AYWB).